The sequence spans 1057 residues: Desmoglein-1-alpha (1057 aa).

Residues Met-1–Ser-23 form the signal peptide. Positions Glu-24–Arg-49 are excised as a propeptide. Cadherin domains are found at residues Glu-50–Phe-157, Ser-158–Leu-269, Glu-270–Ser-389, and Arg-386–Glu-493. Topologically, residues Glu-50–Pro-564 are extracellular. N-linked (GlcNAc...) asparagine glycans are attached at residues Asn-110 and Asn-180. The interval Thr-490–Glu-552 is disordered. Positions Asn-510–Thr-525 are enriched in polar residues. Residues Ala-565–Ile-585 traverse the membrane as a helical segment. Residues Cys-586 to Lys-1057 lie on the Cytoplasmic side of the membrane. 5 Desmoglein repeat repeats span residues Ala-832–Glu-858, Ser-859–Val-888, Gly-889–Ile-918, Ala-919–Ile-946, and Gln-947–Val-975.

Binds to JUP/plakoglobin. Interacts with PKP2. Interacts with DSC3; there is evidence to suggest that the interaction promotes cell-cell adhesion of keratinocytes. In terms of tissue distribution, expressed in testis.

Its subcellular location is the cell membrane. The protein resides in the cell junction. The protein localises to the desmosome. It localises to the cytoplasm. It is found in the nucleus. In terms of biological role, component of intercellular desmosome junctions. Involved in the interaction of plaque proteins and intermediate filaments mediating cell-cell adhesion. In Mus musculus (Mouse), this protein is Desmoglein-1-alpha (Dsg1a).